The sequence spans 313 residues: uncharacterized protein (313 aa).

The N-acetyltransferase domain occupies 6–152 (YDILENPEPN…YHASMEKMTG (147 aa)).

In terms of biological role, to the C-terminal of C.elegans F21C10.9. This is an uncharacterized protein from Caenorhabditis elegans.